A 378-amino-acid chain; its full sequence is 2-aminoethylphosphonate--pyruvate transaminase 1 (378 aa).

Lysine 194 bears the N6-(pyridoxal phosphate)lysine mark.

It belongs to the class-V pyridoxal-phosphate-dependent aminotransferase family. PhnW subfamily. Homodimer. The cofactor is pyridoxal 5'-phosphate.

It carries out the reaction (2-aminoethyl)phosphonate + pyruvate = phosphonoacetaldehyde + L-alanine. In terms of biological role, involved in phosphonate degradation. The protein is 2-aminoethylphosphonate--pyruvate transaminase 1 of Cupriavidus pinatubonensis (strain JMP 134 / LMG 1197) (Cupriavidus necator (strain JMP 134)).